We begin with the raw amino-acid sequence, 392 residues long: DNA replication and repair protein RecF (392 aa).

G33–T40 lines the ATP pocket.

It belongs to the RecF family.

The protein localises to the cytoplasm. Functionally, the RecF protein is involved in DNA metabolism; it is required for DNA replication and normal SOS inducibility. RecF binds preferentially to single-stranded, linear DNA. It also seems to bind ATP. The chain is DNA replication and repair protein RecF from Caulobacter sp. (strain K31).